The chain runs to 305 residues: Phosphatidate cytidylyltransferase (305 aa).

The next 8 helical transmembrane spans lie at 27 to 47, 67 to 87, 96 to 116, 124 to 144, 150 to 170, 202 to 222, 232 to 252, and 277 to 297; these read FLVI…VGLL, FPFS…ALTC, FPEH…IRLV, LGPI…SVPI, ILYG…AIFL, TVVG…LFYS, IAVP…GFFG, and MLDV…ILLI.

Belongs to the CDS family.

The protein resides in the cell membrane. The catalysed reaction is a 1,2-diacyl-sn-glycero-3-phosphate + CTP + H(+) = a CDP-1,2-diacyl-sn-glycerol + diphosphate. It participates in phospholipid metabolism; CDP-diacylglycerol biosynthesis; CDP-diacylglycerol from sn-glycerol 3-phosphate: step 3/3. This is Phosphatidate cytidylyltransferase (cdsA) from Chlamydia trachomatis serovar D (strain ATCC VR-885 / DSM 19411 / UW-3/Cx).